A 58-amino-acid polypeptide reads, in one-letter code: MRCLPVVVFLLLLLSAAAAPGVGSKTERLPGLTSSGDSDESLPFLNTICCWSGACCGG.

The first 18 residues, 1–18, serve as a signal peptide directing secretion; sequence MRCLPVVVFLLLLLSAAA. The propeptide occupies 19-28; it reads APGVGSKTER.

The protein belongs to the conotoxin T superfamily. In terms of processing, contains 2 disulfide bonds that can be either 'C1-C3, C2-C4' or 'C1-C4, C2-C3', since these disulfide connectivities have been observed for conotoxins with cysteine framework V (for examples, see AC P0DQQ7 and AC P81755). Expressed by the venom duct.

It localises to the secreted. In terms of biological role, probable neurotoxin. The polypeptide is Conotoxin Im5.4 (Conus imperialis (Imperial cone)).